Consider the following 345-residue polypeptide: Opioid-binding protein/cell adhesion molecule (345 aa).

An N-terminal signal peptide occupies residues 1–27 (MGVCGYLFLPWKCLVVVSLRLLFLVPT). Ig-like C2-type domains lie at 39 to 126 (PKAM…PKTS), 136 to 219 (PQIM…VKIT), and 223 to 310 (PPYI…ASIT). 3 N-linked (GlcNAc...) asparagine glycosylation sites follow: Asn-44, Asn-70, and Asn-140. A disulfide bridge links Cys-57 with Cys-115. Disulfide bonds link Cys-157–Cys-202 and Cys-244–Cys-296. Residues Asn-285, Asn-293, and Asn-306 are each glycosylated (N-linked (GlcNAc...) asparagine). Asn-322 is lipidated: GPI-anchor amidated asparagine. Positions 323-345 (SASRALACLWLSGTLLAHFFIKF) are cleaved as a propeptide — removed in mature form.

It belongs to the immunoglobulin superfamily. IgLON family.

It is found in the cell membrane. Binds opioids in the presence of acidic lipids; probably involved in cell contact. The sequence is that of Opioid-binding protein/cell adhesion molecule (OPCML) from Homo sapiens (Human).